A 380-amino-acid chain; its full sequence is Guanine nucleotide-binding protein subunit beta (380 aa).

WD repeat units lie at residues 64–94, 106–136, 155–186, 203–234, 247–277, 296–326, and 342–372; these read GHSG…IVWN, LHCP…SIFN, GHKG…VLWD, GHTA…RLWD, GHEG…RLFD, NELP…YVWD, and SHEG…KIWA.

Belongs to the WD repeat G protein beta family. In terms of assembly, g proteins are composed of 3 units, alpha, beta and gamma. Interacts with the gamma subunits RGG1 and RGG2.

It localises to the cell membrane. Functionally, guanine nucleotide-binding proteins (G proteins) are involved as modulators or transducers in various transmembrane signaling systems. The beta and gamma chains are required for the GTPase activity, for replacement of GDP by GTP, and for G protein-effector interaction. The polypeptide is Guanine nucleotide-binding protein subunit beta (Oryza sativa subsp. japonica (Rice)).